Reading from the N-terminus, the 79-residue chain is Protein S100-G (79 aa).

S2 carries the N-acetylserine modification. 2 EF-hand domains span residues 13–48 and 45–79; these read IFEKYAAKEGDPDQLSKDELKLLIQAEFPSLLKGPN and KGPNTLDDLFQELDKNGDGEVSFEEFQVLVKKISQ. Residues Q26 and E31 each contribute to the Ca(2+) site. S42 carries the post-translational modification Phosphoserine. Residues D58, N60, D62, E64, and E69 each contribute to the Ca(2+) site.

It belongs to the S-100 family.

This is Protein S100-G (S100G) from Homo sapiens (Human).